A 71-amino-acid polypeptide reads, in one-letter code: Small ribosomal subunit protein bS21 (71 aa).

Belongs to the bacterial ribosomal protein bS21 family.

The sequence is that of Small ribosomal subunit protein bS21 from Vesicomyosocius okutanii subsp. Calyptogena okutanii (strain HA).